The following is a 261-amino-acid chain: 4-hydroxy-tetrahydrodipicolinate reductase (261 aa).

NAD(+)-binding positions include 13-18, 91-93, and 115-118; these read GMAGRM, GTS, and APNF. Catalysis depends on histidine 149, which acts as the Proton donor/acceptor. Histidine 150 serves as a coordination point for (S)-2,3,4,5-tetrahydrodipicolinate. Residue lysine 153 is the Proton donor of the active site. Residue 159 to 160 participates in (S)-2,3,4,5-tetrahydrodipicolinate binding; the sequence is GT.

It belongs to the DapB family.

It is found in the cytoplasm. It catalyses the reaction (S)-2,3,4,5-tetrahydrodipicolinate + NAD(+) + H2O = (2S,4S)-4-hydroxy-2,3,4,5-tetrahydrodipicolinate + NADH + H(+). It carries out the reaction (S)-2,3,4,5-tetrahydrodipicolinate + NADP(+) + H2O = (2S,4S)-4-hydroxy-2,3,4,5-tetrahydrodipicolinate + NADPH + H(+). Its pathway is amino-acid biosynthesis; L-lysine biosynthesis via DAP pathway; (S)-tetrahydrodipicolinate from L-aspartate: step 4/4. Catalyzes the conversion of 4-hydroxy-tetrahydrodipicolinate (HTPA) to tetrahydrodipicolinate. This is 4-hydroxy-tetrahydrodipicolinate reductase from Granulibacter bethesdensis (strain ATCC BAA-1260 / CGDNIH1).